Here is a 468-residue protein sequence, read N- to C-terminus: Cytochrome bd ubiquinol oxidase subunit 1 (468 aa).

Transmembrane regions (helical) follow at residues 15–35, 51–71, 95–115, 124–144, 177–197, 219–239, 331–351, 366–386, and 416–436; these read TLFH…VALM, AKFW…TGIL, LAIE…LWIF, IHAL…FWIL, LWVE…FFIA, LAMI…HMQA, FRIM…GLWL, IMIA…IMTE, and SIIA…FLFI. Heme b is bound at residue histidine 18. Histidine 183 serves as a coordination point for heme b. Methionine 334 is a heme b binding site. Residues 448–468 are disordered; the sequence is HHDVPVSTDPFSQEVYHGISS.

This sequence belongs to the cytochrome ubiquinol oxidase subunit 1 family. As to quaternary structure, heterodimer of subunits I and II. Heme b serves as cofactor. Requires heme d cis-diol as cofactor.

It localises to the cell membrane. The catalysed reaction is 2 a ubiquinol + O2(in) + 4 H(+)(in) = 2 a ubiquinone + 2 H2O(in) + 4 H(+)(out). This is Cytochrome bd ubiquinol oxidase subunit 1 (cydA) from Bacillus subtilis (strain 168).